We begin with the raw amino-acid sequence, 853 residues long: DNA mismatch repair protein MutS (853 aa).

613–620 (GPNMGGKS) provides a ligand contact to ATP.

It belongs to the DNA mismatch repair MutS family.

Functionally, this protein is involved in the repair of mismatches in DNA. It is possible that it carries out the mismatch recognition step. This protein has a weak ATPase activity. The polypeptide is DNA mismatch repair protein MutS (Vibrio vulnificus (strain YJ016)).